The primary structure comprises 425 residues: MKKFPEGFLWGVATASYQIEGSPLADGAGMSIWHTFSHTPGNVKNGDTGDVACDHYNRWKEDIEIIEKIGAKAYRFSISWPRILPEGTGKVNQKGLDFYNRIIDTLLEKNITPFITIYHWDLPFSLQLKGGWANRDIADWFAEYSRVLFENFGDRVKHWITLNEPWVVAIVGHLYGVHAPGMKDIYVAFHTVHNLLRAHAKSVKVFRETVKDGKIGIVFNNGYFEPASEREEDIRAARFMHQFNNYPLFLNPIYRGEYPDLVLEFAREYLPRNYEDDMEEIKQEIDFVGLNYYSGHMVKYDPNSPARVSFVERNLPKTAMGWEIVPEGIYWILKGVKEEYNPQEVYITENGAAFDDVVSEGGKVHDQNRIDYLRAHIEQVWRAIQDGVPLKGYFVWSLLDNFEWAEGYSKRFGIVYVDYNTQKRI.

Glu164 acts as the Proton donor in catalysis. Glu349 serves as the catalytic Nucleophile.

Belongs to the glycosyl hydrolase 1 family. In terms of assembly, monomer.

It carries out the reaction Hydrolysis of (1-&gt;4)-linkages in (1-&gt;4)-beta-D-glucans, to remove successive glucose units.. It catalyses the reaction Hydrolysis of terminal, non-reducing beta-D-glucosyl residues with release of beta-D-glucose.. Its pathway is glycan metabolism; cellulose degradation. It participates in glycan metabolism; beta-D-glucan degradation. Broad substrate specificity glycosidase. Releases glucose from soluble glucooligomers, with a preference for longer oligomers; acts more readily on cellotetraose than on cellobiose. Displays similar activities towards the disaccharides lactose and cellobiose. Is also able to hydrolyze various aryl-beta-glycosides in vitro. This is 1,4-beta-D-glucan glucohydrolase (bglA) from Thermotoga neapolitana.